We begin with the raw amino-acid sequence, 424 residues long: MDFPIRSQARLYPAQCVTFCLYVRVPPLSEWNFLKMQTDARPSATWPSVPKVHKRNRSTSLSDQQTAKKAHANHARLHLPQPIEPVYESQNGSVSQSEEKSSAVEINNSAAGDPQRFAVADLNFSWAEEEEKVVLAPYDYVASNSGKEFRTLILNAFNAWFRVPPESLTIICDVVRMLHTSSLLIDDIQDNSLLRRGRPVAHSIYGVAQTINTGNYVYFLAAKELNKLRNAASALEVFTAEMLNLHRGQGQELYWRDTLKCPTEDEYLKMVSNKTGGLFRMAVKLMQAESPAGPMAPVCDKLVQLLGLVYQIADDYKNLTAVEYTTSKGFCEDLTEGKFSFPVVHSIQSRPEDRRLYQILAQKTTEVEVKKYAVSYIESTGSLEYTKQVVRVLVQRARDELSRIDQGRERNQEMHALLGKMALE.

Residues 42–73 (PSATWPSVPKVHKRNRSTSLSDQQTAKKAHAN) are disordered. Residues 58–67 (STSLSDQQTA) are compositionally biased toward polar residues. Isopentenyl diphosphate-binding residues include K147, R150, and H179. D186 and D190 together coordinate Mg(2+). R195 is a dimethylallyl diphosphate binding site. R196 contacts isopentenyl diphosphate. The dimethylallyl diphosphate site is built by K274, T275, Q311, K328, and K338.

This sequence belongs to the FPP/GGPP synthase family. Mg(2+) serves as cofactor.

It localises to the cytoplasm. The catalysed reaction is isopentenyl diphosphate + dimethylallyl diphosphate = (2E)-geranyl diphosphate + diphosphate. The enzyme catalyses isopentenyl diphosphate + (2E)-geranyl diphosphate = (2E,6E)-farnesyl diphosphate + diphosphate. It carries out the reaction isopentenyl diphosphate + (2E,6E)-farnesyl diphosphate = (2E,6E,10E)-geranylgeranyl diphosphate + diphosphate. It functions in the pathway isoprenoid biosynthesis; farnesyl diphosphate biosynthesis; farnesyl diphosphate from geranyl diphosphate and isopentenyl diphosphate: step 1/1. The protein operates within isoprenoid biosynthesis; geranyl diphosphate biosynthesis; geranyl diphosphate from dimethylallyl diphosphate and isopentenyl diphosphate: step 1/1. It participates in isoprenoid biosynthesis; geranylgeranyl diphosphate biosynthesis; geranylgeranyl diphosphate from farnesyl diphosphate and isopentenyl diphosphate: step 1/1. In terms of biological role, catalyzes the trans-addition of the 3 molecules of isopentenyl diphosphate (IPP) onto dimethylallyl diphosphate (DMAPP) to form geranylgeranyl pyrophosphate (GGDP). In Phomopsis amygdali (Fusicoccum amygdali), this protein is Geranylgeranyl pyrophosphate synthase D (GGS-D).